Consider the following 240-residue polypeptide: Bactofilin BacP (240 aa).

The interacts with PadC stretch occupies residues 116–240 (DVEPGRLPAE…KKVVVKKKTR (125 aa)). Residues 117-240 (VEPGRLPAER…KKVVVKKKTR (124 aa)) form a disordered region. Positions 126–150 (RPAVVRPTAVTRPTATPARPTIPAA) are enriched in low complexity. Residues 151-173 (RPMPPPPPSRPTPPPPPARPSAP) are compositionally biased toward pro residues. Positions 229–240 (AKKKVVVKKKTR) are enriched in basic residues.

This sequence belongs to the bactofilin family. Interacts with BacN and probably also BacO, the 3 proteins colocalize as an extended structure. Interacts with PadC.

The protein localises to the cytoplasm. Its subcellular location is the cytoskeleton. Its function is as follows. A non-essential component of the chromosome segregation machinery. Positions the ParA-ParB-parS chromosome segregation machinery within the cell; BacP seems to be the most important bactofilin in this process. Forms a heteropolymeric, subpolar scaffold in the cell; BacP probably forms the core, BacO contributes to position and integrity while BacN does not seem to contribute to assembly. In Myxococcus xanthus (strain DK1622), this protein is Bactofilin BacP.